The chain runs to 406 residues: MAENGKNCDQRRVAMNKEHHNGNFTDPSSVNEKKRREREERQNIVLWRQPLITLQYFSLEILVILKEWTSKLWHRQSIVVSFLLLLAVLIATYYVEGVHQQYVQRIEKQFLLYAYWIGLGILSSVGLGTGLHTFLLYLGPHIASVTLAAYECNSVNFPEPPYPDQIICPDEEGTEGTISLWSIISKVRIEACMWGIGTAIGELPPYFMARAARLSGAEPDDEEYQEFEEMLEHAESAQDFASRAKLAVQKLVQKVGFFGILACASIPNPLFDLAGITCGHFLVPFWTFFGATLIGKAIIKMHIQKIFVIITFSKHIVEQMVAFIGAVPGIGPSLQKPFQEYLEAQRQKLHHKSEMGTPQGENWLSWMFEKLVVVMVCYFILSIINSMAQSYAKRIQQRLNSEEKTK.

Residues 1 to 21 show a composition bias toward basic and acidic residues; it reads MAENGKNCDQRRVAMNKEHHN. A disordered region spans residues 1–35; it reads MAENGKNCDQRRVAMNKEHHNGNFTDPSSVNEKKR. N-acetylalanine is present on A2. Residues 2 to 43 lie on the Cytoplasmic side of the membrane; the sequence is AENGKNCDQRRVAMNKEHHNGNFTDPSSVNEKKRREREERQN. Residues 44–64 traverse the membrane as a helical segment; that stretch reads IVLWRQPLITLQYFSLEILVI. Residues 65-77 are Extracellular-facing; sequence LKEWTSKLWHRQS. A helical membrane pass occupies residues 78-98; that stretch reads IVVSFLLLLAVLIATYYVEGV. Residues 99–109 lie on the Cytoplasmic side of the membrane; the sequence is HQQYVQRIEKQ. A helical transmembrane segment spans residues 110–130; that stretch reads FLLYAYWIGLGILSSVGLGTG. The Extracellular portion of the chain corresponds to 131-250; it reads LHTFLLYLGP…ASRAKLAVQK (120 aa). The tract at residues 173–316 is VTT domain; the sequence is GTEGTISLWS…FVIITFSKHI (144 aa). The chain crosses the membrane as a helical span at residues 251 to 271; sequence LVQKVGFFGILACASIPNPLF. Residues 272–273 are Cytoplasmic-facing; it reads DL. The helical transmembrane segment at 274-294 threads the bilayer; sequence AGITCGHFLVPFWTFFGATLI. Residues 295–305 lie on the Extracellular side of the membrane; the sequence is GKAIIKMHIQK. A helical membrane pass occupies residues 306 to 326; sequence IFVIITFSKHIVEQMVAFIGA. The Cytoplasmic segment spans residues 327–363; sequence VPGIGPSLQKPFQEYLEAQRQKLHHKSEMGTPQGENW. Residues 364 to 384 form a helical membrane-spanning segment; it reads LSWMFEKLVVVMVCYFILSII. Residues 385-406 lie on the Extracellular side of the membrane; sequence NSMAQSYAKRIQQRLNSEEKTK.

It belongs to the VMP1 family. In terms of assembly, interacts with BECN1. Interacts with TJP1. Interacts with TP53INP2. Interacts with TMEM41B. Interacts with ATP2A2, PLN and SLN; competes with PLN and SLN to prevent them from forming an inhibitory complex with ATP2A2. Interacts with ATG2A.

The protein localises to the endoplasmic reticulum-Golgi intermediate compartment membrane. The protein resides in the cell membrane. It is found in the vacuole membrane. Its subcellular location is the endoplasmic reticulum membrane. It catalyses the reaction a 1,2-diacyl-sn-glycero-3-phospho-L-serine(in) = a 1,2-diacyl-sn-glycero-3-phospho-L-serine(out). It carries out the reaction cholesterol(in) = cholesterol(out). The catalysed reaction is a 1,2-diacyl-sn-glycero-3-phosphocholine(in) = a 1,2-diacyl-sn-glycero-3-phosphocholine(out). The enzyme catalyses a 1,2-diacyl-sn-glycero-3-phosphoethanolamine(in) = a 1,2-diacyl-sn-glycero-3-phosphoethanolamine(out). Functionally, phospholipid scramblase involved in lipid homeostasis and membrane dynamics processes. Has phospholipid scramblase activity toward cholesterol and phosphatidylserine, as well as phosphatidylethanolamine and phosphatidylcholine. Required for autophagosome formation: participates in early stages of autophagosome biogenesis at the endoplasmic reticulum (ER) membrane by reequilibrating the leaflets of the ER as lipids are extracted by ATG2 (ATG2A or ATG2B) to mediate autophagosome assembly. Regulates ATP2A2 activity to control ER-isolation membrane contacts for autophagosome formation. In addition to autophagy, involved in other processes in which phospholipid scramblase activity is required. Modulates ER contacts with lipid droplets, mitochondria and endosomes. Plays an essential role in formation of cell junctions. Upon stress such as bacterial and viral infection, promotes formation of cytoplasmic vacuoles followed by cell death. Involved in the cytoplasmic vacuolization of acinar cells during the early stage of acute pancreatitis. (Microbial infection) Host factor required for infection by all flaviviruses tested such as Zika virus and Yellow fever virus. Probably required post-entry of the virus to facilitate the ER membrane remodeling necessary to form replication organelles. In Homo sapiens (Human), this protein is Vacuole membrane protein 1.